A 364-amino-acid chain; its full sequence is Fructose-1,6-bisphosphatase class 1 1 (364 aa).

Mg(2+) is bound by residues Glu99, Asp121, Leu123, and Asp124. Residues 124-127 and Asn220 each bind substrate; that span reads DGSS. Glu292 serves as a coordination point for Mg(2+).

This sequence belongs to the FBPase class 1 family. In terms of assembly, homotetramer. Mg(2+) serves as cofactor.

It is found in the cytoplasm. The catalysed reaction is beta-D-fructose 1,6-bisphosphate + H2O = beta-D-fructose 6-phosphate + phosphate. It participates in carbohydrate biosynthesis; gluconeogenesis. This chain is Fructose-1,6-bisphosphatase class 1 1, found in Albidiferax ferrireducens (strain ATCC BAA-621 / DSM 15236 / T118) (Rhodoferax ferrireducens).